The primary structure comprises 374 residues: Retron Eco8 reverse transcriptase (374 aa).

In terms of domain architecture, Reverse transcriptase spans 25-252 (ENIITQSAIP…KEISINGYVI (228 aa)). 3 residues coordinate Mg(2+): Asp-107, Asp-200, and Asp-201.

This sequence belongs to the bacterial reverse transcriptase family.

It carries out the reaction DNA(n) + a 2'-deoxyribonucleoside 5'-triphosphate = DNA(n+1) + diphosphate. In terms of biological role, reverse transcriptase (RT) component of antiviral defense system retron Eco8, composed of this RT, the following endonuclease and a non-coding RNA (ncRNA) encoded between them. Expression of retron Eco8 confers protection against bacteriophages T4, T6, T7 and SECphi4, SECphi6 and SECphi18. At multiplicity of infection (MOI) of 0.02 cultures slow growth when infected with SECphi4 but do not collapse, at MOI 2 cultures collapse. Responsible for synthesis of msDNA (a branched molecule with RNA linked by a 2',5'-phosphodiester bond to ssDNA). The retron transcript serves as primer (from a conserved internal G residue) and template for the reaction, and codes for the RT. This chain is Retron Eco8 reverse transcriptase, found in Escherichia coli.